A 393-amino-acid chain; its full sequence is Chalcone synthase 3 (393 aa).

The active site involves cysteine 166.

The protein belongs to the thiolase-like superfamily. Chalcone/stilbene synthases family.

The enzyme catalyses (E)-4-coumaroyl-CoA + 3 malonyl-CoA + 3 H(+) = 2',4,4',6'-tetrahydroxychalcone + 3 CO2 + 4 CoA. Its pathway is secondary metabolite biosynthesis; flavonoid biosynthesis. Its function is as follows. The primary product of this enzyme is 4,2',4',6'-tetrahydroxychalcone (also termed naringenin-chalcone or chalcone) which can under specific conditions spontaneously isomerize into naringenin. The sequence is that of Chalcone synthase 3 (CHS3) from Ruta graveolens (Common rue).